We begin with the raw amino-acid sequence, 388 residues long: 1-deoxy-D-xylulose 5-phosphate reductoisomerase (388 aa).

The NADPH site is built by Thr15, Gly16, Ser17, Ile18, and Asn127. Lys128 is a 1-deoxy-D-xylulose 5-phosphate binding site. Glu129 serves as a coordination point for NADPH. Asp153 provides a ligand contact to Mn(2+). 4 residues coordinate 1-deoxy-D-xylulose 5-phosphate: Ser154, Glu155, Ser179, and His202. Glu155 contributes to the Mn(2+) binding site. Gly208 lines the NADPH pocket. Positions 215, 220, 221, and 224 each coordinate 1-deoxy-D-xylulose 5-phosphate. Glu224 contributes to the Mn(2+) binding site.

It belongs to the DXR family. Mg(2+) is required as a cofactor. The cofactor is Mn(2+).

It carries out the reaction 2-C-methyl-D-erythritol 4-phosphate + NADP(+) = 1-deoxy-D-xylulose 5-phosphate + NADPH + H(+). The protein operates within isoprenoid biosynthesis; isopentenyl diphosphate biosynthesis via DXP pathway; isopentenyl diphosphate from 1-deoxy-D-xylulose 5-phosphate: step 1/6. Catalyzes the NADPH-dependent rearrangement and reduction of 1-deoxy-D-xylulose-5-phosphate (DXP) to 2-C-methyl-D-erythritol 4-phosphate (MEP). The sequence is that of 1-deoxy-D-xylulose 5-phosphate reductoisomerase from Bacteroides fragilis (strain ATCC 25285 / DSM 2151 / CCUG 4856 / JCM 11019 / LMG 10263 / NCTC 9343 / Onslow / VPI 2553 / EN-2).